Consider the following 374-residue polypeptide: Probable aminopeptidase YDR415C (374 aa).

Positions 1-18 are cleaved as a signal peptide; sequence MRIQSLFVLFNVAIIAWS. The Zn(2+) site is built by His-177, Asp-196, Glu-235, Asp-262, and His-340.

This sequence belongs to the peptidase M28 family. M28E subfamily. The cofactor is Zn(2+).

This chain is Probable aminopeptidase YDR415C, found in Saccharomyces cerevisiae (strain ATCC 204508 / S288c) (Baker's yeast).